Consider the following 314-residue polypeptide: Homoserine kinase (314 aa).

95 to 105 (PHSRGLGSSAS) is a binding site for ATP.

The protein belongs to the GHMP kinase family. Homoserine kinase subfamily.

The protein localises to the cytoplasm. It carries out the reaction L-homoserine + ATP = O-phospho-L-homoserine + ADP + H(+). The protein operates within amino-acid biosynthesis; L-threonine biosynthesis; L-threonine from L-aspartate: step 4/5. In terms of biological role, catalyzes the ATP-dependent phosphorylation of L-homoserine to L-homoserine phosphate. The chain is Homoserine kinase from Rhodococcus erythropolis (strain PR4 / NBRC 100887).